Consider the following 357-residue polypeptide: Thiamine thiazole synthase 3, chloroplastic (357 aa).

The transit peptide at Met1–Ser51 directs the protein to the chloroplast. Substrate-binding positions include Ala103, Glu123 to Gln124, Gly131, and Ala196. The residue at position 225 (Cys225) is a 2,3-didehydroalanine (Cys). Residues Asp227, His242, Met294, and Arg304 to Gly306 contribute to the substrate site.

Belongs to the THI4 family. In terms of assembly, homooctamer. Fe cation serves as cofactor. In terms of processing, during the catalytic reaction, a sulfide is transferred from Cys-225 to a reaction intermediate, generating a dehydroalanine residue.

The protein localises to the plastid. The protein resides in the chloroplast. The catalysed reaction is [ADP-thiazole synthase]-L-cysteine + glycine + NAD(+) = [ADP-thiazole synthase]-dehydroalanine + ADP-5-ethyl-4-methylthiazole-2-carboxylate + nicotinamide + 3 H2O + 2 H(+). In terms of biological role, involved in biosynthesis of the thiamine precursor thiazole. Catalyzes the conversion of NAD and glycine to adenosine diphosphate 5-(2-hydroxyethyl)-4-methylthiazole-2-carboxylic acid (ADT), an adenylated thiazole intermediate. The reaction includes an iron-dependent sulfide transfer from a conserved cysteine residue of the protein to a thiazole intermediate. The enzyme can only undergo a single turnover, which suggests it is a suicide enzyme. May have additional roles in adaptation to various stress conditions and in DNA damage tolerance. This chain is Thiamine thiazole synthase 3, chloroplastic, found in Physcomitrium patens (Spreading-leaved earth moss).